Here is a 152-residue protein sequence, read N- to C-terminus: Transcriptional repressor NrdR (152 aa).

A zinc finger lies at 3 to 34 (CPYCNASETKVIDSRLAAEGAQVRRRRSCNSC). The ATP-cone domain maps to 49-139 (PRIIKSSGKI…VYRDFQDIDA (91 aa)).

The protein belongs to the NrdR family. Zn(2+) serves as cofactor.

Negatively regulates transcription of bacterial ribonucleotide reductase nrd genes and operons by binding to NrdR-boxes. In Psychrobacter cryohalolentis (strain ATCC BAA-1226 / DSM 17306 / VKM B-2378 / K5), this protein is Transcriptional repressor NrdR.